Consider the following 148-residue polypeptide: Large ribosomal subunit protein uL15 (148 aa).

Residues 1 to 10 (MQLHNLEYKK) are compositionally biased toward basic and acidic residues. The interval 1-42 (MQLHNLEYKKGSRNHKEKRVGRGHGSGLGKTSGRGQDGQKAR) is disordered. Over residues 11–22 (GSRNHKEKRVGR) the composition is skewed to basic residues. Gly residues predominate over residues 23–36 (GHGSGLGKTSGRGQ).

The protein belongs to the universal ribosomal protein uL15 family. Part of the 50S ribosomal subunit.

In terms of biological role, binds to the 23S rRNA. The protein is Large ribosomal subunit protein uL15 of Ureaplasma urealyticum serovar 10 (strain ATCC 33699 / Western).